The following is a 115-amino-acid chain: Disintegrin EC6 subunit alpha (115 aa).

The signal sequence occupies residues 1 to 20 (MIQVLLVIICLAVFPYQGSS). The propeptide occupies 21-47 (IILESGNINDYEIVYPKKVAVLPTGAM). One can recognise a Disintegrin domain in the interval 48–112 (NSVHPCCDPV…DCPRNRYKGK (65 aa)). Intrachain disulfides connect cysteine 53-cysteine 76, cysteine 67-cysteine 73, cysteine 72-cysteine 97, and cysteine 85-cysteine 104. The Cell attachment site; atypical (MLD) signature appears at 89–91 (MLD).

Belongs to the disintegrin family. Dimeric disintegrin subfamily. In terms of assembly, heterodimer with subunit beta; disulfide-linked. Expressed by the venom gland.

The protein localises to the secreted. In terms of biological role, potently inhibits adhesion of alpha-4/beta-1 (ITGA4/ITGB1) and alpha-9/beta-1 (ITGA9/ITGB1) integrins to VCAM1, and adhesion of alpha-5/beta-1 (ITGA5/ITGB1) integrin to fibronectin. Has a much less effect on alpha-IIb/beta-3 (ITGA2B/ITGB3) integrin. Also potently inhibits neutrophil migration across TNF-alpha-activated human umbilical endothelial cells. This chain is Disintegrin EC6 subunit alpha, found in Echis carinatus sochureki (Saw-scaled viper).